The sequence spans 719 residues: Protein Hook homolog 3 (719 aa).

A Calponin-homology (CH) domain is found at 7 to 123 (VDLCESLLTW…RMLQLILGCA (117 aa)). Coiled-coil stretches lie at residues 162-431 (SIGT…QAQE) and 459-665 (EIKE…IVSA). The tract at residues 679–719 (EDRLASTGSGQSFLARQRQATSSRRSYPGHVQPATASDVIA) is disordered. Residues 693–704 (ARQRQATSSRRS) are compositionally biased toward low complexity.

It belongs to the hook family. Interacts with microtubules.

The protein localises to the cytoplasm. The protein resides in the cytoskeleton. It localises to the golgi apparatus. Its function is as follows. Acts as an adapter protein linking the dynein motor complex to various cargos and converts dynein from a non-processive to a highly processive motor in the presence of dynactin. Facilitates the interaction between dynein and dynactin and activates dynein processivity (the ability to move along a microtubule for a long distance without falling off the track). Predominantly recruits 2 dyneins, which increases both the force and speed of the microtubule motor. Component of the FTS/Hook/FHIP complex (FHF complex). The FHF complex may function to promote vesicle trafficking and/or fusion via the homotypic vesicular protein sorting complex (the HOPS complex). May regulate clearance of endocytosed receptors such as MSR1. Participates in defining the architecture and localization of the Golgi complex. FHF complex promotes the distribution of AP-4 complex to the perinuclear area of the cell. The sequence is that of Protein Hook homolog 3 (hook3) from Xenopus laevis (African clawed frog).